Here is a 228-residue protein sequence, read N- to C-terminus: 7-cyano-7-deazaguanine synthase (228 aa).

7–17 (LSGGLDSSTAL) lines the ATP pocket. The Zn(2+) site is built by cysteine 190, cysteine 202, cysteine 205, and cysteine 208.

Belongs to the QueC family. Zn(2+) serves as cofactor.

The enzyme catalyses 7-carboxy-7-deazaguanine + NH4(+) + ATP = 7-cyano-7-deazaguanine + ADP + phosphate + H2O + H(+). Its pathway is purine metabolism; 7-cyano-7-deazaguanine biosynthesis. Functionally, catalyzes the ATP-dependent conversion of 7-carboxy-7-deazaguanine (CDG) to 7-cyano-7-deazaguanine (preQ(0)). The sequence is that of 7-cyano-7-deazaguanine synthase from Acaryochloris marina (strain MBIC 11017).